Consider the following 750-residue polypeptide: Photosystem I P700 chlorophyll a apoprotein A1 (750 aa).

A run of 8 helical transmembrane segments spans residues 70 to 93 (VFSAHFGQLSIIFLWLSGMYFHGA), 156 to 179 (LYCTAIGALVFASLMLFAGWFHYH), 195 to 219 (LNHHLAGLLGLGSLSWAGHQIHVSL), 291 to 309 (IAHHHLAIAILFLIAGHMY), 346 to 369 (WHAQLSLNLAMLGSLTIVVAHHMY), 385 to 411 (LSLFTHHMWIGGFLIVGAAAHAAIFMV), 433 to 455 (AIISHLNWACIFLGFHSFGLYIH), and 531 to 549 (FLVHHIHAFTIHVTVLILL). Cys573 and Cys582 together coordinate [4Fe-4S] cluster. The next 2 membrane-spanning stretches (helical) occupy residues 589-610 (HVFLGLFWMYNAISVVIFHFSW) and 664-686 (LSAYGLFFLGAHFVWAFSLMFLF). Residue His675 participates in chlorophyll a' binding. Chlorophyll a is bound by residues Met683 and Tyr691. Trp692 provides a ligand contact to phylloquinone. A helical membrane pass occupies residues 724-744 (AVGVTHYLLGGIATTWAFFLA).

It belongs to the PsaA/PsaB family. As to quaternary structure, the PsaA/B heterodimer binds the P700 chlorophyll special pair and subsequent electron acceptors. PSI consists of a core antenna complex that captures photons, and an electron transfer chain that converts photonic excitation into a charge separation. The eukaryotic PSI reaction center is composed of at least 11 subunits. It depends on P700 is a chlorophyll a/chlorophyll a' dimer, A0 is one or more chlorophyll a, A1 is one or both phylloquinones and FX is a shared 4Fe-4S iron-sulfur center. as a cofactor.

The protein resides in the plastid. It localises to the chloroplast thylakoid membrane. The catalysed reaction is reduced [plastocyanin] + hnu + oxidized [2Fe-2S]-[ferredoxin] = oxidized [plastocyanin] + reduced [2Fe-2S]-[ferredoxin]. Functionally, psaA and PsaB bind P700, the primary electron donor of photosystem I (PSI), as well as the electron acceptors A0, A1 and FX. PSI is a plastocyanin-ferredoxin oxidoreductase, converting photonic excitation into a charge separation, which transfers an electron from the donor P700 chlorophyll pair to the spectroscopically characterized acceptors A0, A1, FX, FA and FB in turn. Oxidized P700 is reduced on the lumenal side of the thylakoid membrane by plastocyanin. In Phalaenopsis aphrodite subsp. formosana (Moth orchid), this protein is Photosystem I P700 chlorophyll a apoprotein A1.